We begin with the raw amino-acid sequence, 508 residues long: MWELVALLLLTLAYLFWPKRRCPGAKYPKSLLSLPLVGSLPFLPRHGHMHNNFFKLQKKYGPIYSVRMGTKTTVIVGHHQLAKEVLIKKGKDFSGRPQVTTLDILSNNRKGIAFADYGAHWQLHRRLAMATFALFKDGDQKLEKIICQEISTLCDMLATHNGQTIDISFPVFVAITNVISLICFNISYKNGDPELKIVHNYNEGIIDSLGKESLVDLFPWLKVFPNKTLEKLKRHVKTRNDLLTKIFENYKEKFHSDSITNMLDVLMQAKMNSDNGNAGPDQDSELLSDNHILTTIGDIFGAGVETTTSVVKWIVAFLLHNPQVKKKLYEEIDQNVGFSRTPTISDRNRLLLLEATIREVLRIRPVAPMLIPHKANVDSSIGEFAVDKGTHVIINLWALHHNEKEWHQPDQFMPERFLNPAGTQLISPSLSYLPFGAGPRSCIGEILARQELFLIMAWLLQRFDLEVPDDGQLPSLEGNPKVVFLIDSFKVKIKVRQAWREAQAEGST.

Residue Asn202 coordinates substrate. A heme-binding site is contributed by Cys442.

This sequence belongs to the cytochrome P450 family. Heme is required as a cofactor.

The protein localises to the endoplasmic reticulum membrane. It localises to the microsome membrane. The enzyme catalyses a C21-steroid + reduced [NADPH--hemoprotein reductase] + O2 = a 17alpha-hydroxy-C21-steroid + oxidized [NADPH--hemoprotein reductase] + H2O + H(+). It carries out the reaction progesterone + reduced [NADPH--hemoprotein reductase] + O2 = 17alpha-hydroxyprogesterone + oxidized [NADPH--hemoprotein reductase] + H2O + H(+). The catalysed reaction is pregnenolone + reduced [NADPH--hemoprotein reductase] + O2 = 17alpha-hydroxypregnenolone + oxidized [NADPH--hemoprotein reductase] + H2O + H(+). It catalyses the reaction 17alpha-hydroxyprogesterone + reduced [NADPH--hemoprotein reductase] + O2 = androst-4-ene-3,17-dione + acetate + oxidized [NADPH--hemoprotein reductase] + H2O + 2 H(+). The enzyme catalyses 17alpha-hydroxyprogesterone + reduced [NADPH--hemoprotein reductase] + O2 = 16alpha,17alpha-dihydroxyprogesterone + oxidized [NADPH--hemoprotein reductase] + H2O + H(+). It carries out the reaction 16alpha,17alpha-dihydroxyprogesterone + reduced [NADPH--hemoprotein reductase] + O2 = 6beta,16alpha,17alpha-trihydroxyprogesterone + oxidized [NADPH--hemoprotein reductase] + H2O + H(+). The catalysed reaction is 17alpha-hydroxypregnenolone + reduced [NADPH--hemoprotein reductase] + O2 = 3beta-hydroxyandrost-5-en-17-one + acetate + oxidized [NADPH--hemoprotein reductase] + H2O + 2 H(+). It catalyses the reaction 16alpha,17alpha-dihydroxypregnenolone + reduced [NADPH--hemoprotein reductase] + O2 = 3beta,16alpha-dihydroxy-androst-5-en-17-one + acetate + oxidized [NADPH--hemoprotein reductase] + H2O + 2 H(+). The enzyme catalyses 3beta-hydroxyandrost-5-en-17-one + reduced [NADPH--hemoprotein reductase] + O2 = 3beta,16alpha-dihydroxy-androst-5-en-17-one + oxidized [NADPH--hemoprotein reductase] + H2O + H(+). It carries out the reaction androst-4-ene-3,17-dione + reduced [NADPH--hemoprotein reductase] + O2 = 16alpha-hydroxyandrost-4-ene-3,17-dione + oxidized [NADPH--hemoprotein reductase] + H2O + H(+). Its pathway is steroid hormone biosynthesis. It participates in steroid biosynthesis; glucocorticoid biosynthesis. Its activity is regulated as follows. Regulated predominantly by intracellular cAMP levels. The 17,20-lyase activity is stimulated by cytochrome b5, which acts as an allosteric effector increasing the Vmax of the lyase activity. Functionally, a cytochrome P450 monooxygenase involved in corticoid and androgen biosynthesis. Catalyzes 17-alpha hydroxylation of C21 steroids, which is common for both pathways. A second oxidative step, required only for androgen synthesis, involves an acyl-carbon cleavage. The 17-alpha hydroxy intermediates, as part of adrenal glucocorticoids biosynthesis pathway, are precursors of cortisol. Hydroxylates steroid hormones, pregnenolone and progesterone to form 17-alpha hydroxy metabolites, followed by the cleavage of the C17-C20 bond to form C19 steroids, dehydroepiandrosterone (DHEA) and androstenedione. Has 16-alpha hydroxylase activity. Catalyzes 16-alpha hydroxylation of 17-alpha hydroxy pregnenolone, followed by the cleavage of the C17-C20 bond to form 16-alpha-hydroxy DHEA. Also 16-alpha hydroxylates androgens, relevant for estriol synthesis. Mechanistically, uses molecular oxygen inserting one oxygen atom into a substrate, and reducing the second into a water molecule, with two electrons provided by NADPH via cytochrome P450 reductase (CPR; NADPH-ferrihemoprotein reductase). This chain is Steroid 17-alpha-hydroxylase/17,20 lyase (CYP17A1), found in Macaca fascicularis (Crab-eating macaque).